The sequence spans 270 residues: Tryptophan synthase alpha chain (270 aa).

Residues E49 and D60 each act as proton acceptor in the active site.

This sequence belongs to the TrpA family. As to quaternary structure, tetramer of two alpha and two beta chains.

The enzyme catalyses (1S,2R)-1-C-(indol-3-yl)glycerol 3-phosphate + L-serine = D-glyceraldehyde 3-phosphate + L-tryptophan + H2O. Its pathway is amino-acid biosynthesis; L-tryptophan biosynthesis; L-tryptophan from chorismate: step 5/5. Its function is as follows. The alpha subunit is responsible for the aldol cleavage of indoleglycerol phosphate to indole and glyceraldehyde 3-phosphate. In Thermobifida fusca (strain YX), this protein is Tryptophan synthase alpha chain.